A 450-amino-acid polypeptide reads, in one-letter code: tRNA modification GTPase MnmE (450 aa).

Residues Arg23, Glu79, and Lys118 each coordinate (6S)-5-formyl-5,6,7,8-tetrahydrofolate. The TrmE-type G domain occupies 214-374; that stretch reads GITLILVGKP…LKEHILNKVG (161 aa). Asn224 contacts K(+). Residues 224–229, 243–249, and 268–271 each bind GTP; these read NAGKSS, TSIAGTT, and DTAG. Ser228 provides a ligand contact to Mg(2+). K(+) is bound by residues Thr243, Ile245, and Thr248. Thr249 contributes to the Mg(2+) binding site. Position 450 (Lys450) interacts with (6S)-5-formyl-5,6,7,8-tetrahydrofolate.

The protein belongs to the TRAFAC class TrmE-Era-EngA-EngB-Septin-like GTPase superfamily. TrmE GTPase family. Homodimer. Heterotetramer of two MnmE and two MnmG subunits. K(+) serves as cofactor.

The protein localises to the cytoplasm. Functionally, exhibits a very high intrinsic GTPase hydrolysis rate. Involved in the addition of a carboxymethylaminomethyl (cmnm) group at the wobble position (U34) of certain tRNAs, forming tRNA-cmnm(5)s(2)U34. This is tRNA modification GTPase MnmE from Francisella tularensis subsp. novicida (strain U112).